Consider the following 334-residue polypeptide: rRNA 2'-O-methyltransferase fibrillarin (334 aa).

The segment covering 1–93 has biased composition (gly residues); that stretch reads MEGRGGSRGG…GGKPAAGGKP (93 aa). The disordered stretch occupies residues 1-94; the sequence is MEGRGGSRGG…GKPAAGGKPG (94 aa). S-adenosyl-L-methionine contacts are provided by residues 184-185, 203-204, 228-229, and 248-251; these read TT, EL, DA, and DVAQ.

Belongs to the methyltransferase superfamily. Fibrillarin family. As to quaternary structure, component of box C/D small nucleolar ribonucleoprotein (snoRNP) particles. It is associated with the U3, U8 and U13 small nuclear RNAs. Part of the small subunit (SSU) processome, composed of more than 70 proteins and the RNA chaperone small nucleolar RNA (snoRNA) U3. In terms of processing, by homology to other fibrillarins, some or all of the N-terminal domain arginines are modified to asymmetric dimethylarginine (DMA).

Its subcellular location is the nucleus. The protein localises to the nucleolus. The enzyme catalyses L-glutaminyl-[histone H2A] + S-adenosyl-L-methionine = N(5)-methyl-L-glutaminyl-[histone H2A] + S-adenosyl-L-homocysteine + H(+). In terms of biological role, S-adenosyl-L-methionine-dependent methyltransferase that has the ability to methylate both RNAs and proteins. Involved in pre-rRNA processing. Utilizes the methyl donor S-adenosyl-L-methionine to catalyze the site-specific 2'-hydroxyl methylation of ribose moieties in pre-ribosomal RNA. Site specificity is provided by a guide RNA that base pairs with the substrate. Methylation occurs at a characteristic distance from the sequence involved in base pairing with the guide RNA. Also acts as a protein methyltransferase by mediating methylation of 'Gln-105' of histone H2A (H2AQ105me), a modification that impairs binding of the FACT complex and is specifically present at 35S ribosomal DNA locus. Part of the small subunit (SSU) processome, first precursor of the small eukaryotic ribosomal subunit. During the assembly of the SSU processome in the nucleolus, many ribosome biogenesis factors, an RNA chaperone and ribosomal proteins associate with the nascent pre-rRNA and work in concert to generate RNA folding, modifications, rearrangements and cleavage as well as targeted degradation of pre-ribosomal RNA by the RNA exosome. This Dictyostelium discoideum (Social amoeba) protein is rRNA 2'-O-methyltransferase fibrillarin (fbl).